A 358-amino-acid chain; its full sequence is Isopentenyl-diphosphate delta-isomerase (358 aa).

12-13 (RK) is a binding site for substrate. FMN contacts are provided by residues 69–71 (AMT), S99, and N128. Residue Q158 participates in substrate binding. Position 159 (E159) interacts with Mg(2+). Residues K190, T220, 267 to 269 (GIR), and 288 to 289 (AG) each bind FMN.

It belongs to the IPP isomerase type 2 family. As to quaternary structure, homooctamer. Dimer of tetramers. Requires FMN as cofactor. The cofactor is NADPH. It depends on Mg(2+) as a cofactor.

Its subcellular location is the cytoplasm. It catalyses the reaction isopentenyl diphosphate = dimethylallyl diphosphate. Functionally, involved in the biosynthesis of isoprenoids. Catalyzes the 1,3-allylic rearrangement of the homoallylic substrate isopentenyl (IPP) to its allylic isomer, dimethylallyl diphosphate (DMAPP). The sequence is that of Isopentenyl-diphosphate delta-isomerase from Listeria welshimeri serovar 6b (strain ATCC 35897 / DSM 20650 / CCUG 15529 / CIP 8149 / NCTC 11857 / SLCC 5334 / V8).